The sequence spans 301 residues: Asialoglycoprotein receptor 2 (301 aa).

The disordered stretch occupies residues 1–43 (MEKDCQDIQQLDSEENDHQLSGDDEHGSHVQDPRIENPHWKGQ). The Cytoplasmic portion of the chain corresponds to 1–58 (MEKDCQDIQQLDSEENDHQLSGDDEHGSHVQDPRIENPHWKGQPLSRPFPQRLCSTFR). Ser13 carries the post-translational modification Phosphoserine. The span at 16–39 (NDHQLSGDDEHGSHVQDPRIENPH) shows a compositional bias: basic and acidic residues. Cys54 carries the S-palmitoyl cysteine lipid modification. A helical; Signal-anchor for type II membrane protein membrane pass occupies residues 59–79 (LSLLALAFNILLLVVICVVSS). Residues 80-301 (QSIQLQEEFR…VCEKRRNITH (222 aa)) lie on the Extracellular side of the membrane. 2 N-linked (GlcNAc...) asparagine glycosylation sites follow: Asn97 and Asn165. Residues 169 to 295 (CCPVNWVEFG…QQVNRWVCEK (127 aa)) form the C-type lectin domain. 3 cysteine pairs are disulfide-bonded: Cys170–Cys181, Cys198–Cys293, and Cys271–Cys285. A glycan (N-linked (GlcNAc...) asparagine) is linked at Asn298.

In terms of assembly, interacts with LASS2. As to expression, expressed exclusively in hepatic parenchymal cells.

The protein resides in the membrane. Functionally, mediates the endocytosis of plasma glycoproteins to which the terminal sialic acid residue on their complex carbohydrate moieties has been removed. The receptor recognizes terminal galactose and N-acetylgalactosamine units. After ligand binding to the receptor, the resulting complex is internalized and transported to a sorting organelle, where receptor and ligand are disassociated. The receptor then returns to the cell membrane surface. The protein is Asialoglycoprotein receptor 2 (Asgr2) of Mus musculus (Mouse).